The sequence spans 595 residues: Transketolase-like protein 1 (595 aa).

Thiamine diphosphate is bound at residue 93 to 95 (GWP). Mg(2+)-binding residues include Asp125, Asn155, and Ile157. Asn155 contributes to the thiamine diphosphate binding site. The thiamine diphosphate site is built by Lys217, Glu339, and Phe365. The Proton donor role is filled by Glu339. Substrate is bound by residues His389 and Asp397. His401 provides a ligand contact to thiamine diphosphate.

This sequence belongs to the transketolase family. Homodimer. Requires Mg(2+) as cofactor. The cofactor is Ca(2+). It depends on Mn(2+) as a cofactor. Co(2+) is required as a cofactor. Thiamine diphosphate serves as cofactor. Not expressed in the embryonic neocortex.

It is found in the cytoplasm. It catalyses the reaction D-sedoheptulose 7-phosphate + D-glyceraldehyde 3-phosphate = aldehydo-D-ribose 5-phosphate + D-xylulose 5-phosphate. Catalyzes the transfer of a two-carbon ketol group from a ketose donor to an aldose acceptor, via a covalent intermediate with the cofactor thiamine pyrophosphate. This chain is Transketolase-like protein 1, found in Mus musculus (Mouse).